The primary structure comprises 359 residues: Peptide chain release factor 1 (359 aa).

An N5-methylglutamine modification is found at Q236.

The protein belongs to the prokaryotic/mitochondrial release factor family. Methylated by PrmC. Methylation increases the termination efficiency of RF1.

The protein resides in the cytoplasm. Its function is as follows. Peptide chain release factor 1 directs the termination of translation in response to the peptide chain termination codons UAG and UAA. The sequence is that of Peptide chain release factor 1 (prfA) from Mycoplasma genitalium (strain ATCC 33530 / DSM 19775 / NCTC 10195 / G37) (Mycoplasmoides genitalium).